A 108-amino-acid polypeptide reads, in one-letter code: Peptidyl-prolyl cis-trans isomerase FKBP1A (108 aa).

The PPIase FKBP-type domain occupies 20 to 108; the sequence is GQTCVVHYTG…IFDVELLKLE (89 aa). Residue K53 is modified to N6-acetyllysine; alternate. K53 carries the N6-succinyllysine; alternate modification.

The protein belongs to the FKBP-type PPIase family. FKBP1 subfamily. As to quaternary structure, interacts with TGFBR1; prevents TGFBR1 phosphorylation by TGFBR2 and stabilizes it in the inactive conformation. Interacts with ACVR1B and SMAD7. Identified in a complex composed of RYR1, PDE4D, PKA, FKBP1A and protein phosphatase 1 (PP1). Interacts directly with RYR2 and RYR3. Interacts with GLMN; rapamycin and FK506 abolish the interaction with GLMN in a dose dependent manner. Interacts directly with RYR1.

It is found in the cytoplasm. Its subcellular location is the cytosol. It localises to the sarcoplasmic reticulum membrane. The enzyme catalyses [protein]-peptidylproline (omega=180) = [protein]-peptidylproline (omega=0). Its activity is regulated as follows. Inhibited by both FK506 and rapamycin. Functionally, keeps in an inactive conformation TGFBR1, the TGF-beta type I serine/threonine kinase receptor, preventing TGF-beta receptor activation in absence of ligand. May modulate the RYR1 calcium channel activity. PPIases accelerate the folding of proteins. It catalyzes the cis-trans isomerization of proline imidic peptide bonds in oligopeptides. The protein is Peptidyl-prolyl cis-trans isomerase FKBP1A (FKBP1A) of Bos taurus (Bovine).